A 392-amino-acid polypeptide reads, in one-letter code: Bifunctional enzyme Fae/Hps (392 aa).

Positions methionine 1 to isoleucine 161 are formaldehyde-activating enzyme. Histidine 17 serves as the catalytic Proton donor. Residues aspartate 19, leucine 48, lysine 66, threonine 68, and glutamine 83 each coordinate substrate. The 3-hexulose-6-phosphate synthase stretch occupies residues methionine 162–phenylalanine 392.

The protein in the N-terminal section; belongs to the formaldehyde-activating enzyme family. In the C-terminal section; belongs to the HPS/KGPDC family. HPS subfamily.

It carries out the reaction 5,6,7,8-tetrahydromethanopterin + formaldehyde = 5,10-methylenetetrahydromethanopterin + H2O. The catalysed reaction is D-ribulose 5-phosphate + formaldehyde = D-arabino-hex-3-ulose 6-phosphate. The protein operates within carbohydrate biosynthesis; D-ribose 5-phosphate biosynthesis. Catalyzes the condensation of formaldehyde with tetrahydromethanopterin (H(4)MPT) to 5,10-methylenetetrahydromethanopterin. In terms of biological role, catalyzes the reversible formation of ribulose-5-phosphate and formaldehyde from 3-hexulose-6-phosphate. This chain is Bifunctional enzyme Fae/Hps, found in Methanosarcina acetivorans (strain ATCC 35395 / DSM 2834 / JCM 12185 / C2A).